We begin with the raw amino-acid sequence, 354 residues long: Putative [LysW]-L-2-aminoadipate/[LysW]-L-glutamate phosphate reductase (354 aa).

NADP(+)-binding positions include 10-13 (SGVI) and 34-36 (SRR). Cys153 is an active-site residue. An NADP(+)-binding site is contributed by Asn321.

This sequence belongs to the NAGSA dehydrogenase family. Type 1 subfamily. LysY sub-subfamily.

Its subcellular location is the cytoplasm. It catalyses the reaction [amino-group carrier protein]-C-terminal-N-(1-carboxy-5-oxopentan-1-yl)-L-glutamine + phosphate + NADP(+) = [amino-group carrier protein]-C-terminal-N-(1-carboxy-5-phosphooxy-5-oxopentan-1-yl)-L-glutamine + NADPH + H(+). The catalysed reaction is [amino-group carrier protein]-C-terminal-gamma-(L-glutamyl-5-semialdehyde)-L-glutamate + phosphate + NADP(+) = [amino-group carrier protein]-C-terminal-gamma-(5-phospho-L-glutamyl)-L-glutamate + NADPH + H(+). It participates in amino-acid biosynthesis; L-lysine biosynthesis via AAA pathway; L-lysine from L-alpha-aminoadipate (Thermus route): step 3/5. Its pathway is amino-acid biosynthesis; L-arginine biosynthesis. Involved in both the arginine and lysine biosynthetic pathways. The sequence is that of Putative [LysW]-L-2-aminoadipate/[LysW]-L-glutamate phosphate reductase from Caldivirga maquilingensis (strain ATCC 700844 / DSM 13496 / JCM 10307 / IC-167).